The primary structure comprises 268 residues: Tetraspanin-33 (268 aa).

Topologically, residues 1–23 (MVRKSPGSGKEEDFTFISPVVKY) are cytoplasmic. Residues 24–44 (LLIFFNMLFWVISMVMVGIGV) form a helical membrane-spanning segment. Residues 45–63 (YARLLKHAEAAMACLAVDP) lie on the Extracellular side of the membrane. Residues 64–84 (ALLLIGVGILMFLITFCGCIG) traverse the membrane as a helical segment. Over 85–95 (SLRENICLLQT) the chain is Cytoplasmic. The chain crosses the membrane as a helical span at residues 96–116 (FSICLTLVFLLQLAVGIVGFI). At 117–226 (FSDKARGKVS…FIHTNGCIDR (110 aa)) the chain is on the extracellular side. Disulfide bonds link Cys-155/Cys-223, Cys-156/Cys-188, Cys-172/Cys-182, and Cys-189/Cys-202. N-linked (GlcNAc...) asparagine glycans are attached at residues Asn-171 and Asn-176. A helical membrane pass occupies residues 227 to 247 (LVNWIHSNLFLLGGVALGLAI). At 248–268 (PQVTKHLRAKLIYTWRIGIQV) the chain is on the cytoplasmic side.

This sequence belongs to the tetraspanin (TM4SF) family. Homodimer; disulfide-linked.

The protein localises to the cell membrane. Its subcellular location is the cell junction. It is found in the adherens junction. The protein resides in the cytoplasm. Functionally, part of TspanC8 subgroup, composed of 6 members that interact with the transmembrane metalloprotease ADAM10. This interaction is required for ADAM10 exit from the endoplasmic reticulum and for enzymatic maturation and trafficking to the cell surface as well as substrate specificity. Different TspanC8/ADAM10 complexes have distinct substrates. This chain is Tetraspanin-33 (tspan33), found in Xenopus laevis (African clawed frog).